A 237-amino-acid polypeptide reads, in one-letter code: tRNA (guanine-N(7)-)-methyltransferase (237 aa).

S-adenosyl-L-methionine is bound by residues D35, E60, N87, and D113. D113 is an active-site residue. Positions 117 and 149 each coordinate substrate.

The protein belongs to the class I-like SAM-binding methyltransferase superfamily. TrmB family.

It carries out the reaction guanosine(46) in tRNA + S-adenosyl-L-methionine = N(7)-methylguanosine(46) in tRNA + S-adenosyl-L-homocysteine. It participates in tRNA modification; N(7)-methylguanine-tRNA biosynthesis. Functionally, catalyzes the formation of N(7)-methylguanine at position 46 (m7G46) in tRNA. The chain is tRNA (guanine-N(7)-)-methyltransferase from Synechococcus sp. (strain WH7803).